The sequence spans 115 residues: NAD(P)H-quinone oxidoreductase subunit M (115 aa).

It belongs to the complex I NdhM subunit family. In terms of assembly, NDH-1 can be composed of about 15 different subunits; different subcomplexes with different compositions have been identified which probably have different functions.

The protein resides in the cellular thylakoid membrane. The catalysed reaction is a plastoquinone + NADH + (n+1) H(+)(in) = a plastoquinol + NAD(+) + n H(+)(out). The enzyme catalyses a plastoquinone + NADPH + (n+1) H(+)(in) = a plastoquinol + NADP(+) + n H(+)(out). NDH-1 shuttles electrons from an unknown electron donor, via FMN and iron-sulfur (Fe-S) centers, to quinones in the respiratory and/or the photosynthetic chain. The immediate electron acceptor for the enzyme in this species is believed to be plastoquinone. Couples the redox reaction to proton translocation, and thus conserves the redox energy in a proton gradient. Cyanobacterial NDH-1 also plays a role in inorganic carbon-concentration. The polypeptide is NAD(P)H-quinone oxidoreductase subunit M (Prochlorococcus marinus (strain MIT 9211)).